Here is a 177-residue protein sequence, read N- to C-terminus: uncharacterized protein (177 aa).

The protein to Synechocystis PCC 6803 slr1290 and sll0925.

This is an uncharacterized protein from Synechocystis sp. (strain ATCC 27184 / PCC 6803 / Kazusa).